The primary structure comprises 136 residues: Large ribosomal subunit protein uL16c (136 aa).

This sequence belongs to the universal ribosomal protein uL16 family. In terms of assembly, part of the 50S ribosomal subunit.

It is found in the plastid. It localises to the chloroplast. In Phaseolus angularis (Azuki bean), this protein is Large ribosomal subunit protein uL16c.